A 261-amino-acid chain; its full sequence is Carnitinyl-CoA dehydratase (261 aa).

Glutamate 111 (nucleophile) is an active-site residue. Catalysis depends on glutamate 131, which acts as the Proton acceptor.

This sequence belongs to the enoyl-CoA hydratase/isomerase family.

The catalysed reaction is (R)-carnitinyl-CoA = crotonobetainyl-CoA + H2O. It functions in the pathway amine and polyamine metabolism; carnitine metabolism. Catalyzes the reversible dehydration of L-carnitinyl-CoA to crotonobetainyl-CoA. This chain is Carnitinyl-CoA dehydratase, found in Salmonella arizonae (strain ATCC BAA-731 / CDC346-86 / RSK2980).